Reading from the N-terminus, the 85-residue chain is Cell division topological specificity factor (85 aa).

Belongs to the MinE family.

Prevents the cell division inhibition by proteins MinC and MinD at internal division sites while permitting inhibition at polar sites. This ensures cell division at the proper site by restricting the formation of a division septum at the midpoint of the long axis of the cell. This chain is Cell division topological specificity factor, found in Xanthomonas euvesicatoria pv. vesicatoria (strain 85-10) (Xanthomonas campestris pv. vesicatoria).